Reading from the N-terminus, the 197-residue chain is ATP-dependent Clp protease proteolytic subunit (197 aa).

Serine 98 acts as the Nucleophile in catalysis. Histidine 123 is an active-site residue.

Belongs to the peptidase S14 family. As to quaternary structure, fourteen ClpP subunits assemble into 2 heptameric rings which stack back to back to give a disk-like structure with a central cavity, resembling the structure of eukaryotic proteasomes.

The protein resides in the cytoplasm. It catalyses the reaction Hydrolysis of proteins to small peptides in the presence of ATP and magnesium. alpha-casein is the usual test substrate. In the absence of ATP, only oligopeptides shorter than five residues are hydrolyzed (such as succinyl-Leu-Tyr-|-NHMec, and Leu-Tyr-Leu-|-Tyr-Trp, in which cleavage of the -Tyr-|-Leu- and -Tyr-|-Trp bonds also occurs).. In terms of biological role, cleaves peptides in various proteins in a process that requires ATP hydrolysis. Has a chymotrypsin-like activity. Plays a major role in the degradation of misfolded proteins. This Haemophilus ducreyi (strain 35000HP / ATCC 700724) protein is ATP-dependent Clp protease proteolytic subunit.